Reading from the N-terminus, the 48-residue chain is MARREFGKGARRCRRCGDTHGVIQKYGIMLCRQCFREVAEKMGFKKYN.

Zn(2+) contacts are provided by C13, C16, C31, and C34.

This sequence belongs to the universal ribosomal protein uS14 family. Zinc-binding uS14 subfamily. Part of the 30S ribosomal subunit. Requires Zn(2+) as cofactor.

Functionally, binds 16S rRNA, required for the assembly of 30S particles. This is Small ribosomal subunit protein uS14 from Methanopyrus kandleri (strain AV19 / DSM 6324 / JCM 9639 / NBRC 100938).